Reading from the N-terminus, the 345-residue chain is Dihydroorotate dehydrogenase (quinone) (345 aa).

FMN-binding positions include 65–69 (AGLDK) and T89. K69 provides a ligand contact to substrate. 114 to 118 (NRMGF) provides a ligand contact to substrate. Residues N142 and N175 each contribute to the FMN site. Residue N175 coordinates substrate. S178 functions as the Nucleophile in the catalytic mechanism. A substrate-binding site is contributed by N180. 2 residues coordinate FMN: K220 and T248. 249–250 (NT) contributes to the substrate binding site. FMN is bound by residues G271, G300, and 321-322 (YT).

Belongs to the dihydroorotate dehydrogenase family. Type 2 subfamily. Monomer. The cofactor is FMN.

The protein localises to the cell membrane. It catalyses the reaction (S)-dihydroorotate + a quinone = orotate + a quinol. It participates in pyrimidine metabolism; UMP biosynthesis via de novo pathway; orotate from (S)-dihydroorotate (quinone route): step 1/1. Its function is as follows. Catalyzes the conversion of dihydroorotate to orotate with quinone as electron acceptor. The protein is Dihydroorotate dehydrogenase (quinone) of Burkholderia thailandensis (strain ATCC 700388 / DSM 13276 / CCUG 48851 / CIP 106301 / E264).